Consider the following 271-residue polypeptide: MLVVEGLTCRFGTKAAVDDASFAVAPGGFVGVIGRSGAGKSTLLRMINRLAEPTAGRILFEGQDVTALRGRELRQWRARSAMIFQQFNLVGRLDVLTNVLMGRLAEMPPWRSLVQAWPERDRALAMSALEQFDMGGVAAQRADSLSGGQQQRVAIARALVQQPDIILADEPIASLDPRNTRIVMDALLRINKHFGITVLCNLHSLDLARTYCDRLIGMSSGRIVFDGAPASLTENIARELYDLEANEVMGAASAPQPAGRMLPALGTAAAA.

Residues 2-245 (LVVEGLTCRF…IARELYDLEA (244 aa)) enclose the ABC transporter domain. 34–41 (GRSGAGKS) serves as a coordination point for ATP.

It belongs to the ABC transporter superfamily. Phosphonates importer (TC 3.A.1.9.1) family. In terms of assembly, the complex is composed of two ATP-binding proteins (PhnC), two transmembrane proteins (PhnE) and a solute-binding protein (PhnD).

The protein resides in the cell inner membrane. It carries out the reaction phosphonate(out) + ATP + H2O = phosphonate(in) + ADP + phosphate + H(+). Part of the ABC transporter complex PhnCDE involved in phosphonates import. Responsible for energy coupling to the transport system. The polypeptide is Phosphonates import ATP-binding protein PhnC 2 (Rhodopseudomonas palustris (strain BisB18)).